Reading from the N-terminus, the 90-residue chain is Acylphosphatase (90 aa).

In terms of domain architecture, Acylphosphatase-like spans 5-90 (CEKFVVSGIV…CREYQGFEIL (86 aa)). Active-site residues include R20 and N38.

It belongs to the acylphosphatase family.

The enzyme catalyses an acyl phosphate + H2O = a carboxylate + phosphate + H(+). This is Acylphosphatase (acyP) from Vibrio vulnificus (strain CMCP6).